Reading from the N-terminus, the 289-residue chain is ATP synthase gamma chain (289 aa).

Belongs to the ATPase gamma chain family. As to quaternary structure, F-type ATPases have 2 components, CF(1) - the catalytic core - and CF(0) - the membrane proton channel. CF(1) has five subunits: alpha(3), beta(3), gamma(1), delta(1), epsilon(1). CF(0) has three main subunits: a, b and c.

It localises to the cell inner membrane. Its function is as follows. Produces ATP from ADP in the presence of a proton gradient across the membrane. The gamma chain is believed to be important in regulating ATPase activity and the flow of protons through the CF(0) complex. The chain is ATP synthase gamma chain from Erwinia tasmaniensis (strain DSM 17950 / CFBP 7177 / CIP 109463 / NCPPB 4357 / Et1/99).